Here is a 423-residue protein sequence, read N- to C-terminus: Phosphoribosylamine--glycine ligase (423 aa).

In terms of domain architecture, ATP-grasp spans lysine 107–aspartate 314. An ATP-binding site is contributed by valine 133–serine 194. Residues glutamate 284 and asparagine 286 each contribute to the Mg(2+) site.

This sequence belongs to the GARS family. It depends on Mg(2+) as a cofactor. Requires Mn(2+) as cofactor.

It carries out the reaction 5-phospho-beta-D-ribosylamine + glycine + ATP = N(1)-(5-phospho-beta-D-ribosyl)glycinamide + ADP + phosphate + H(+). The protein operates within purine metabolism; IMP biosynthesis via de novo pathway; N(1)-(5-phospho-D-ribosyl)glycinamide from 5-phospho-alpha-D-ribose 1-diphosphate: step 2/2. The chain is Phosphoribosylamine--glycine ligase from Neisseria meningitidis serogroup B (strain ATCC BAA-335 / MC58).